We begin with the raw amino-acid sequence, 391 residues long: Elongation factor Tu (391 aa).

Residues 10 to 201 enclose the tr-type G domain; that stretch reads KPHVNIGTIG…AVDAYIPTPE (192 aa). A G1 region spans residues 19 to 26; that stretch reads GHVDHGKT. GTP is bound at residue 19–26; it reads GHVDHGKT. Thr26 lines the Mg(2+) pocket. The tract at residues 55-59 is G2; the sequence is GITIS. The G3 stretch occupies residues 76-79; sequence DCPG. GTP-binding positions include 76–80 and 131–134; these read DCPGH and NKVD. Residues 131–134 form a G4 region; the sequence is NKVD. The interval 169–171 is G5; it reads SAL.

The protein belongs to the TRAFAC class translation factor GTPase superfamily. Classic translation factor GTPase family. EF-Tu/EF-1A subfamily. In terms of assembly, monomer.

The protein localises to the cytoplasm. The enzyme catalyses GTP + H2O = GDP + phosphate + H(+). Functionally, GTP hydrolase that promotes the GTP-dependent binding of aminoacyl-tRNA to the A-site of ribosomes during protein biosynthesis. The polypeptide is Elongation factor Tu (Rhizobium johnstonii (strain DSM 114642 / LMG 32736 / 3841) (Rhizobium leguminosarum bv. viciae)).